A 257-amino-acid polypeptide reads, in one-letter code: Hydroxyethylthiazole kinase 1 (257 aa).

Residue M41 coordinates substrate. 2 residues coordinate ATP: K117 and T162. G189 is a substrate binding site.

This sequence belongs to the Thz kinase family. Mg(2+) serves as cofactor.

It catalyses the reaction 5-(2-hydroxyethyl)-4-methylthiazole + ATP = 4-methyl-5-(2-phosphooxyethyl)-thiazole + ADP + H(+). Its pathway is cofactor biosynthesis; thiamine diphosphate biosynthesis; 4-methyl-5-(2-phosphoethyl)-thiazole from 5-(2-hydroxyethyl)-4-methylthiazole: step 1/1. Functionally, catalyzes the phosphorylation of the hydroxyl group of 4-methyl-5-beta-hydroxyethylthiazole (THZ). This Oceanobacillus iheyensis (strain DSM 14371 / CIP 107618 / JCM 11309 / KCTC 3954 / HTE831) protein is Hydroxyethylthiazole kinase 1.